Consider the following 161-residue polypeptide: MAPTQSQSRATTRWSLTRLAQQVRPHPTLLLLIRSNPMGPHSAWSWLLPLVQSNPMSLRQYATALQSFVLLLGTTGCPRELFLDLYRFIPTLTRTLLTSLGCGPGGAVVLRSGYRSLVLACSLGVSLLLSYHQGLIPRPSGTQACCLTLSLMLASLSQFLS.

It belongs to the sapovirus VP3 family.

This is an uncharacterized protein from Sapporo virus (isolate GI/Human/Germany/pJG-Sap01) (Hu/Dresden/pJG-Sap01/DE).